A 217-amino-acid polypeptide reads, in one-letter code: tRNA (guanine-N(7)-)-methyltransferase (217 aa).

E44, E69, D96, and D118 together coordinate S-adenosyl-L-methionine. The active site involves D118. Residues K122, D154, and 191–194 (TEYE) contribute to the substrate site.

This sequence belongs to the class I-like SAM-binding methyltransferase superfamily. TrmB family.

The catalysed reaction is guanosine(46) in tRNA + S-adenosyl-L-methionine = N(7)-methylguanosine(46) in tRNA + S-adenosyl-L-homocysteine. It functions in the pathway tRNA modification; N(7)-methylguanine-tRNA biosynthesis. Functionally, catalyzes the formation of N(7)-methylguanine at position 46 (m7G46) in tRNA. The chain is tRNA (guanine-N(7)-)-methyltransferase from Bacillus mycoides (strain KBAB4) (Bacillus weihenstephanensis).